Here is a 161-residue protein sequence, read N- to C-terminus: RNA pyrophosphohydrolase (161 aa).

In terms of domain architecture, Nudix hydrolase spans 12-154 (PYRIGVGMVI…KRKLYKAVIN (143 aa)). A Nudix box motif is present at residues 46-67 (GGIILGETYSKAVLREMKEEIG).

The protein belongs to the Nudix hydrolase family. RppH subfamily. It depends on a divalent metal cation as a cofactor.

Functionally, accelerates the degradation of transcripts by removing pyrophosphate from the 5'-end of triphosphorylated RNA, leading to a more labile monophosphorylated state that can stimulate subsequent ribonuclease cleavage. In Orientia tsutsugamushi (strain Boryong) (Rickettsia tsutsugamushi), this protein is RNA pyrophosphohydrolase.